We begin with the raw amino-acid sequence, 671 residues long: Zinc finger protein 750 (671 aa).

A CCHC-type zinc finger spans residues 25-51 (YKCFQCPFTCNEKSHLFNHMKYGLCKN). Zn(2+) contacts are provided by Cys-27, Cys-30, His-43, and Cys-49. Disordered regions lie at residues 66–87 (PKVN…SPVP), 366–433 (ETSP…KDFT), and 592–671 (SSPG…PRVS). Polar residues-rich tracts occupy residues 67-78 (KVNSTDQKQPSN) and 402-412 (SPTNFTQNSQG).

The protein localises to the nucleus. Transcription factor involved in epidermis differentiation. The sequence is that of Zinc finger protein 750 (znf750) from Xenopus tropicalis (Western clawed frog).